The primary structure comprises 481 residues: tRNA-2-methylthio-N(6)-dimethylallyladenosine synthase (481 aa).

In terms of domain architecture, MTTase N-terminal spans 24-140; that stretch reads KKLFIESYGC…LPNLLNEVEE (117 aa). Cysteine 33, cysteine 69, cysteine 103, cysteine 178, cysteine 182, and cysteine 185 together coordinate [4Fe-4S] cluster. Residues 164–411 enclose the Radical SAM core domain; that stretch reads MSNGITALVA…DLQQKHAWWR (248 aa). Residues 413-476 form the TRAM domain; the sequence is EDFIGQTVEV…SGTLKGEAVG (64 aa).

Belongs to the methylthiotransferase family. MiaB subfamily. In terms of assembly, monomer. The cofactor is [4Fe-4S] cluster.

It localises to the cytoplasm. It catalyses the reaction N(6)-dimethylallyladenosine(37) in tRNA + (sulfur carrier)-SH + AH2 + 2 S-adenosyl-L-methionine = 2-methylsulfanyl-N(6)-dimethylallyladenosine(37) in tRNA + (sulfur carrier)-H + 5'-deoxyadenosine + L-methionine + A + S-adenosyl-L-homocysteine + 2 H(+). Functionally, catalyzes the methylthiolation of N6-(dimethylallyl)adenosine (i(6)A), leading to the formation of 2-methylthio-N6-(dimethylallyl)adenosine (ms(2)i(6)A) at position 37 in tRNAs that read codons beginning with uridine. This chain is tRNA-2-methylthio-N(6)-dimethylallyladenosine synthase, found in Flavobacterium psychrophilum (strain ATCC 49511 / DSM 21280 / CIP 103535 / JIP02/86).